Here is a 437-residue protein sequence, read N- to C-terminus: Trigger factor (437 aa).

A PPIase FKBP-type domain is found at 164–249 (GDRVTIDFAG…LKSVEAPKLP (86 aa)).

The protein belongs to the FKBP-type PPIase family. Tig subfamily.

It localises to the cytoplasm. The catalysed reaction is [protein]-peptidylproline (omega=180) = [protein]-peptidylproline (omega=0). In terms of biological role, involved in protein export. Acts as a chaperone by maintaining the newly synthesized protein in an open conformation. Functions as a peptidyl-prolyl cis-trans isomerase. The polypeptide is Trigger factor (Azoarcus sp. (strain BH72)).